A 126-amino-acid chain; its full sequence is Protein translocase subunit SecE (126 aa).

The next 3 helical transmembrane spans lie at 20–40 (WLAA…YGEM), 42–62 (VVVR…VAAT), and 97–117 (IVLA…GIMV).

The protein belongs to the SecE/SEC61-gamma family. As to quaternary structure, component of the Sec protein translocase complex. Heterotrimer consisting of SecY, SecE and SecG subunits. The heterotrimers can form oligomers, although 1 heterotrimer is thought to be able to translocate proteins. Interacts with the ribosome. Interacts with SecDF, and other proteins may be involved. Interacts with SecA.

Its subcellular location is the cell inner membrane. In terms of biological role, essential subunit of the Sec protein translocation channel SecYEG. Clamps together the 2 halves of SecY. May contact the channel plug during translocation. The chain is Protein translocase subunit SecE from Vibrio alginolyticus.